A 329-amino-acid chain; its full sequence is NADH-quinone oxidoreductase subunit H 2 (329 aa).

8 helical membrane passes run glycine 12–alanine 32, tryptophan 78–isoleucine 98, valine 120–glycine 140, leucine 159–serine 179, glycine 191–alanine 211, leucine 242–phenylalanine 262, leucine 270–tryptophan 290, and lysine 309–valine 329.

It belongs to the complex I subunit 1 family. In terms of assembly, NDH-1 is composed of 14 different subunits. Subunits NuoA, H, J, K, L, M, N constitute the membrane sector of the complex.

The protein resides in the cell inner membrane. The enzyme catalyses a quinone + NADH + 5 H(+)(in) = a quinol + NAD(+) + 4 H(+)(out). Its function is as follows. NDH-1 shuttles electrons from NADH, via FMN and iron-sulfur (Fe-S) centers, to quinones in the respiratory chain. The immediate electron acceptor for the enzyme in this species is believed to be ubiquinone. Couples the redox reaction to proton translocation (for every two electrons transferred, four hydrogen ions are translocated across the cytoplasmic membrane), and thus conserves the redox energy in a proton gradient. This subunit may bind ubiquinone. This is NADH-quinone oxidoreductase subunit H 2 from Geobacter sulfurreducens (strain ATCC 51573 / DSM 12127 / PCA).